A 348-amino-acid chain; its full sequence is Oxidase ucsJ (348 aa).

Belongs to the avfA family.

The protein operates within mycotoxin biosynthesis. Its function is as follows. Oxidase; part of the gene cluster that mediates the biosynthesis of UCS1025A, a member of the pyrrolizidinone family that acts as a strong telomerase inhibitor and displays potent antibacterial and antitumor properties. These compounds share a hemiaminal-containing pyrrolizidinone core fused with a gamma-lactone, giving a furopyrrolizidine that is connected to a decalin fragment. The polyketide synthase module (PKS) of the PKS-NRPS ucsA is responsible for the synthesis of the polyketide backbone via the condensation of an acetyl-CoA starter unit with 6 malonyl-CoA units. The downstream nonribosomal peptide synthetase (NRPS) module then amidates the carboxyl end of the polyketide with a 2S,3S-methylproline derived from L-isoleucine by the 2-oxoglutarate-dependent dioxygenase ucsF which converts L-isoleucine to (4S,5S)-4-methylpyrroline-5-carboxylate that is further converted to 2S,3S-methylproline by the pyrroline-5-carboxylate reductase ucsG. Reductive release of the completed aminoacyl polyketide from the assembly line can form the 3-pyrrolin-2-one structure via an intramolecular Knoevenagel reaction. Because ucsA lacks a designated enoylreductase (ER) domain, the required activity is provided the enoyl reductase ucsL. This keto acyclic precursor is the substrate of the Diels-Alderase ucsH, that catalyzes the Diels-Alder cycloaddition. Oxidation of the 3S-methyl group to a carboxylate by the cytochrome P450 monooxygenase ucsK allows an oxa-Michael cyclization that might involve the reductase/dehydrogenase ucsI and which furnishes the furopyrrolizidine. The oxidase ucsJ likely plays a critical role in stereoselective reduction of the C5-C6 double bond to afford the required R-configured carboxylate group. Further enolization and oxidation at C5 by an unidentified enzyme affords the last intermediate that can undergo oxa-Michael cyclization to yield UCS1025A. The protein is Oxidase ucsJ of Acremonium sp.